We begin with the raw amino-acid sequence, 138 residues long: Nucleoside diphosphate kinase (138 aa).

ATP-binding residues include Lys-10, Phe-58, Arg-86, Thr-92, Arg-103, and Asn-113. The active-site Pros-phosphohistidine intermediate is His-116.

The protein belongs to the NDK family. Homotetramer. The cofactor is Mg(2+).

The protein localises to the cytoplasm. It catalyses the reaction a 2'-deoxyribonucleoside 5'-diphosphate + ATP = a 2'-deoxyribonucleoside 5'-triphosphate + ADP. The enzyme catalyses a ribonucleoside 5'-diphosphate + ATP = a ribonucleoside 5'-triphosphate + ADP. In terms of biological role, major role in the synthesis of nucleoside triphosphates other than ATP. The ATP gamma phosphate is transferred to the NDP beta phosphate via a ping-pong mechanism, using a phosphorylated active-site intermediate. This Actinobacillus pleuropneumoniae serotype 7 (strain AP76) protein is Nucleoside diphosphate kinase.